The sequence spans 413 residues: Alpha-1-antitrypsin 1-2 (413 aa).

The first 24 residues, 1–24 (MTPSISWGLLLLAGLCCMVPSFLA), serve as a signal peptide directing secretion. 3 N-linked (GlcNAc...) asparagine glycosylation sites follow: Asn64, Asn101, and Asn265. Residues 368-387 (AATVFEAVPMSMPPILRFDH) form an RCL region.

This sequence belongs to the serpin family.

It localises to the secreted. Functionally, inhibitor of serine proteases. Its primary target is elastase, but it also has a moderate affinity for plasmin and thrombin. The sequence is that of Alpha-1-antitrypsin 1-2 (Serpina1b) from Mus musculus (Mouse).